Consider the following 212-residue polypeptide: ATP phosphoribosyltransferase (212 aa).

This sequence belongs to the ATP phosphoribosyltransferase family. Short subfamily. In terms of assembly, heteromultimer composed of HisG and HisZ subunits.

The protein resides in the cytoplasm. It catalyses the reaction 1-(5-phospho-beta-D-ribosyl)-ATP + diphosphate = 5-phospho-alpha-D-ribose 1-diphosphate + ATP. The protein operates within amino-acid biosynthesis; L-histidine biosynthesis; L-histidine from 5-phospho-alpha-D-ribose 1-diphosphate: step 1/9. In terms of biological role, catalyzes the condensation of ATP and 5-phosphoribose 1-diphosphate to form N'-(5'-phosphoribosyl)-ATP (PR-ATP). Has a crucial role in the pathway because the rate of histidine biosynthesis seems to be controlled primarily by regulation of HisG enzymatic activity. The protein is ATP phosphoribosyltransferase of Prochlorococcus marinus (strain MIT 9312).